A 177-amino-acid chain; its full sequence is Endothelin-2 (177 aa).

An N-terminal signal peptide occupies residues 1-23 (MPTALCSIALALLVALHEGKSQA). Positions 24-45 (ATTPIPEQPAPLPRARGSHLRT) are excised as a propeptide. Disulfide bonds link C48-C62 and C50-C58. A propeptide spanning residues 69–177 (VNTPGQTAPY…RPTHSRQRKR (109 aa)) is cleaved from the precursor. The interval 95-110 (CECYSARDPACATFCH) is endothelin-like. Residues 155–177 (HFARQQQKPTRETRPTHSRQRKR) form a disordered region.

The protein belongs to the endothelin/sarafotoxin family. In terms of tissue distribution, expressed in various organs including heart, lung, liver, kidney, gastrointestinal tract, uterus and ovary, but not in spleen. Within the gastrointestinal tract, gene expression was detected in rumen, a ruminant-specific digestive organ, as well as stomach, duodenum and colon.

It is found in the secreted. Endothelins are endothelium-derived vasoconstrictor peptides. This Bos taurus (Bovine) protein is Endothelin-2 (EDN2).